A 466-amino-acid chain; its full sequence is 3-isopropylmalate dehydratase large subunit (466 aa).

[4Fe-4S] cluster contacts are provided by Cys-347, Cys-407, and Cys-410.

The protein belongs to the aconitase/IPM isomerase family. LeuC type 1 subfamily. As to quaternary structure, heterodimer of LeuC and LeuD. The cofactor is [4Fe-4S] cluster.

The enzyme catalyses (2R,3S)-3-isopropylmalate = (2S)-2-isopropylmalate. It participates in amino-acid biosynthesis; L-leucine biosynthesis; L-leucine from 3-methyl-2-oxobutanoate: step 2/4. Catalyzes the isomerization between 2-isopropylmalate and 3-isopropylmalate, via the formation of 2-isopropylmaleate. The protein is 3-isopropylmalate dehydratase large subunit of Shigella boydii serotype 4 (strain Sb227).